Consider the following 149-residue polypeptide: Arginine repressor (149 aa).

The protein belongs to the ArgR family.

The protein localises to the cytoplasm. The protein operates within amino-acid biosynthesis; L-arginine biosynthesis [regulation]. Its function is as follows. Regulates arginine biosynthesis genes. The polypeptide is Arginine repressor (Exiguobacterium sp. (strain ATCC BAA-1283 / AT1b)).